The chain runs to 193 residues: p53 apoptosis effector related to PMP-22 (193 aa).

The next 4 membrane-spanning stretches (helical) occupy residues 12–32 (RWIL…ALAG), 81–101 (LFCG…ALCG), 110–130 (VIGG…VIYP), and 151–171 (WAYG…FFFC).

It belongs to the TMEM47 family. In terms of tissue distribution, expressed in the stratified squamous skin epithelium of the skin and the tongue, but not in simple epithelia (at protein level). Expressed in the oral epithelium, tongue epithelium and skin (at protein level). More abundant in areas of lower flow stress in the inner curvature compared to the outer curvature regions of the aorta (at protein level). Expressed in luminal cells and myoepithelium cells of the mammary epithelium (at protein level). Expression increases during the early stages of pregnancy before decreasing before birth, expression continues to be weak during involution which mirrors decreased desmosome abundance and organization at these time points (at protein level). Expressed by epithelial cells at the mucosal surface in the proximal colon (at protein level). Expressed in apoptotic cells.

Its subcellular location is the cell junction. The protein localises to the desmosome. It is found in the cell membrane. The protein resides in the cytoplasm. Functionally, component of intercellular desmosome junctions. Plays a role in stratified epithelial integrity and cell-cell adhesion by promoting desmosome assembly. Thereby plays a role in barrier function of the skin against infection. Plays a role in mammary epithelial tissue homeostasis and remodeling during and after pregnancy, potentially via its involvement in desmosome cell-cell junctions. Required for tooth enamel development via facilitating desmosome-mediated ameloblast adhesion to the stratum intermedium during the transitional stage of amelogenesis. May also play a role in downstream transcriptional regulation of other genes involved in amelogenesis such as AMBN, ENAM, MMP20 and KLK4. Plays a role as an effector in the TP53-dependent apoptotic pathway. Positively regulates apoptosis in T-helper 17 (Th17) cell populations via caspase-dependent signaling. Promotes neutrophil transepithelial migration in response to chemoattractants such as hepoxilin A3 (HXA3), N-Formylmethionyl-leucyl-phenylalanine (fMLP) and CXCL8/IL-8. May act as a positive regulator of endothelial cell apoptosis in response to blood flow-derived shear stress. This is p53 apoptosis effector related to PMP-22 from Mus musculus (Mouse).